Consider the following 450-residue polypeptide: D-inositol 3-phosphate glycosyltransferase (450 aa).

His21 contacts 1D-myo-inositol 3-phosphate. UDP-N-acetyl-alpha-D-glucosamine-binding positions include 27 to 28 (QP) and Gly35. Residues 32–37 (DAGGMN), Lys90, Tyr123, Thr147, and Arg167 contribute to the 1D-myo-inositol 3-phosphate site. Arg241, Lys246, and Val307 together coordinate UDP-N-acetyl-alpha-D-glucosamine. Residues Tyr316, Arg317, and Ala319 each contribute to the Mg(2+) site. Positions 329 and 337 each coordinate UDP-N-acetyl-alpha-D-glucosamine. Thr343 lines the Mg(2+) pocket.

It belongs to the glycosyltransferase group 1 family. MshA subfamily. In terms of assembly, homodimer.

It carries out the reaction 1D-myo-inositol 3-phosphate + UDP-N-acetyl-alpha-D-glucosamine = 1D-myo-inositol 2-acetamido-2-deoxy-alpha-D-glucopyranoside 3-phosphate + UDP + H(+). Its function is as follows. Catalyzes the transfer of a N-acetyl-glucosamine moiety to 1D-myo-inositol 3-phosphate to produce 1D-myo-inositol 2-acetamido-2-deoxy-glucopyranoside 3-phosphate in the mycothiol biosynthesis pathway. The sequence is that of D-inositol 3-phosphate glycosyltransferase from Geodermatophilus obscurus (strain ATCC 25078 / DSM 43160 / JCM 3152 / CCUG 61914 / KCC A-0152 / KCTC 9177 / NBRC 13315 / NRRL B-3577 / G-20).